Reading from the N-terminus, the 177-residue chain is tRNA (cytidine(56)-2'-O)-methyltransferase (177 aa).

S-adenosyl-L-methionine contacts are provided by residues L84 and 109–113 (GAEKV).

It belongs to the aTrm56 family. In terms of assembly, homodimer.

It is found in the cytoplasm. The catalysed reaction is cytidine(56) in tRNA + S-adenosyl-L-methionine = 2'-O-methylcytidine(56) in tRNA + S-adenosyl-L-homocysteine + H(+). Functionally, specifically catalyzes the AdoMet-dependent 2'-O-ribose methylation of cytidine at position 56 in tRNAs. The sequence is that of tRNA (cytidine(56)-2'-O)-methyltransferase from Methanosarcina barkeri (strain Fusaro / DSM 804).